Here is a 193-residue protein sequence, read N- to C-terminus: MKKNTSIKQTVTIAINTAIYVILSCFASIPIGPNVVLETSFSFLVFVAVLFGSKVGLSVGLLGHIIKDFFLFGNVYFNWIVCSGLLGFLFGLSKNLINLKYHSFTRKKILFFWLYQVFVNVLVFGLIAPISDVWIYAQPLKLVFLQGFLVVLSNILSYSLFGIFLMSKYSNNYGKKEVLASNNCVYYKKPPLF.

The next 5 helical transmembrane spans lie at 11 to 31, 43 to 63, 69 to 89, 109 to 129, and 147 to 167; these read VTIA…SIPI, FLVF…GLLG, FFLF…LGFL, ILFF…LIAP, and GFLV…FLMS.

The protein belongs to the UPF0397 family.

The protein resides in the cell membrane. This Phytoplasma australiense protein is UPF0397 protein PA0141.